Reading from the N-terminus, the 694-residue chain is MTTPDAEDASPSPEYRSDQDDDMAAEQTTDRQSGDASPTQKPANGKPNAKDPLRPRRKKARRACFACQRAHLTCGDERPCGRCIKRGLQDHCMDGVRKKAKYLHDAPDGSLMPGVGGHYPYMNGNRPTPLPAQDTHTVSVSPQSNMYNQAQPPAAFYPPNSIPGQLPVTQDTRAFSNQQSPISPPFTQAHHASVQNAGAPSTMSQGQQGMQQFGPLFDPSDPALFNFDISSLNFGNHYGALEFGMLGHMSSGAVETPHDNNLMNNMSGSVNMYNQQVPSGYPDQNNAAAMAFGPNGLPGSEWQETQSRQGSMHVHTPNNTSGSGSHDHHPHRNDSLNGPHAFAIGQGPATHSTASPASTDASTYEGDNPLSTAAFFANANRPHAQRSPLVSRPQQENRPPTTALQSIHANGIRKRQRDTKSVYQGITKPYDYVKGYHRLYQLIDKKYSRPWVAKAQQYLQNYRPVLLQVREELNRDDLIHQEMGLQRHLMTLQEHFAEVGTPFLICRRSGEIVGINKEFTILTGWKRDVLLGHEPNLNVNLGTNRESSESDTSTQNTTPNLSAQDSEGATPSVNIIELMDARSALEFLQHFSELCYQDPRGYASQRVNMLRYQTKADVDRIHNMKNASSGDAKLDPLVKMEGGAVHQGESAMQRLGAKSGMVDCMIWWHIKRDIFDMPVLVCMSVMPVLDKGLP.

Residues 1–57 (MTTPDAEDASPSPEYRSDQDDDMAAEQTTDRQSGDASPTQKPANGKPNAKDPLRPRR) form a disordered region. A DNA-binding region (zn(2)-C6 fungal-type) is located at residues 64–92 (CFACQRAHLTCGDERPCGRCIKRGLQDHC). Disordered regions lie at residues 175–216 (FSNQ…FGPL), 289–369 (AMAF…GDNP), 384–420 (AQRS…RDTK), and 539–569 (VNLG…SEGA). Over residues 193 to 204 (SVQNAGAPSTMS) the composition is skewed to polar residues. Positions 205–214 (QGQQGMQQFG) are enriched in low complexity. Residues 302-324 (WQETQSRQGSMHVHTPNNTSGSG) show a composition bias toward polar residues. Residues 349–363 (ATHSTASPASTDAST) show a composition bias toward low complexity. The span at 392 to 408 (RPQQENRPPTTALQSIH) shows a compositional bias: polar residues. The PAS domain occupies 485–559 (LQRHLMTLQE…SDTSTQNTTP (75 aa)).

The protein belongs to the ERT1/acuK family.

The protein localises to the nucleus. Functionally, transcription factor which regulates nonfermentable carbon utilization. Activator of gluconeogenetic genes. The sequence is that of Transcription activator of gluconeogenesis PTRG_06536 from Pyrenophora tritici-repentis (strain Pt-1C-BFP) (Wheat tan spot fungus).